Here is a 399-residue protein sequence, read N- to C-terminus: S-adenosylmethionine synthase (399 aa).

136–141 (GTGSAD) is a binding site for ATP.

Belongs to the AdoMet synthase 2 family. The cofactor is Mg(2+).

The enzyme catalyses L-methionine + ATP + H2O = S-adenosyl-L-methionine + phosphate + diphosphate. The protein operates within amino-acid biosynthesis; S-adenosyl-L-methionine biosynthesis; S-adenosyl-L-methionine from L-methionine: step 1/1. Its function is as follows. Catalyzes the formation of S-adenosylmethionine from methionine and ATP. This is S-adenosylmethionine synthase from Methanothrix thermoacetophila (strain DSM 6194 / JCM 14653 / NBRC 101360 / PT) (Methanosaeta thermophila).